Reading from the N-terminus, the 270-residue chain is Regulatory protein RecX (270 aa).

It belongs to the RecX family.

The protein resides in the cytoplasm. In terms of biological role, modulates RecA activity. The sequence is that of Regulatory protein RecX from Bacillus cereus (strain ZK / E33L).